The following is a 492-amino-acid chain: Bifunctional protein GlmU (492 aa).

The pyrophosphorylase stretch occupies residues 1–238 (MRDAAVVILA…AALVAGVNDR (238 aa)). UDP-N-acetyl-alpha-D-glucosamine is bound by residues 9–12 (LAAG), K23, Q80, and 85–86 (GT). D111 is a binding site for Mg(2+). 4 residues coordinate UDP-N-acetyl-alpha-D-glucosamine: G148, E163, N178, and N236. N236 contributes to the Mg(2+) binding site. Residues 239-259 (VQLADLAAVLNRRIVEGHQRA) are linker. Positions 260–492 (GVTIIDPAST…EDQGPEATGE (233 aa)) are N-acetyltransferase. UDP-N-acetyl-alpha-D-glucosamine contacts are provided by R341 and K359. H371 (proton acceptor) is an active-site residue. UDP-N-acetyl-alpha-D-glucosamine is bound by residues Y374 and N385. Acetyl-CoA is bound by residues A388, 394-395 (NY), S413, and A431. Over residues 469 to 483 (EAAAAAGAGAGAAAE) the composition is skewed to low complexity. The segment at 469-492 (EAAAAAGAGAGAAAEDQGPEATGE) is disordered.

In the N-terminal section; belongs to the N-acetylglucosamine-1-phosphate uridyltransferase family. It in the C-terminal section; belongs to the transferase hexapeptide repeat family. In terms of assembly, homotrimer. Requires Mg(2+) as cofactor.

It is found in the cytoplasm. The enzyme catalyses alpha-D-glucosamine 1-phosphate + acetyl-CoA = N-acetyl-alpha-D-glucosamine 1-phosphate + CoA + H(+). The catalysed reaction is N-acetyl-alpha-D-glucosamine 1-phosphate + UTP + H(+) = UDP-N-acetyl-alpha-D-glucosamine + diphosphate. The protein operates within nucleotide-sugar biosynthesis; UDP-N-acetyl-alpha-D-glucosamine biosynthesis; N-acetyl-alpha-D-glucosamine 1-phosphate from alpha-D-glucosamine 6-phosphate (route II): step 2/2. It functions in the pathway nucleotide-sugar biosynthesis; UDP-N-acetyl-alpha-D-glucosamine biosynthesis; UDP-N-acetyl-alpha-D-glucosamine from N-acetyl-alpha-D-glucosamine 1-phosphate: step 1/1. It participates in bacterial outer membrane biogenesis; LPS lipid A biosynthesis. Catalyzes the last two sequential reactions in the de novo biosynthetic pathway for UDP-N-acetylglucosamine (UDP-GlcNAc). The C-terminal domain catalyzes the transfer of acetyl group from acetyl coenzyme A to glucosamine-1-phosphate (GlcN-1-P) to produce N-acetylglucosamine-1-phosphate (GlcNAc-1-P), which is converted into UDP-GlcNAc by the transfer of uridine 5-monophosphate (from uridine 5-triphosphate), a reaction catalyzed by the N-terminal domain. The polypeptide is Bifunctional protein GlmU (Mycolicibacterium vanbaalenii (strain DSM 7251 / JCM 13017 / BCRC 16820 / KCTC 9966 / NRRL B-24157 / PYR-1) (Mycobacterium vanbaalenii)).